The chain runs to 215 residues: LexA repressor (215 aa).

Positions 28–48 (RAEIAAELGFSSPNAAEEHLR) form a DNA-binding region, H-T-H motif. Residues Ser133 and Lys170 each act as for autocatalytic cleavage activity in the active site.

Belongs to the peptidase S24 family. As to quaternary structure, homodimer.

It carries out the reaction Hydrolysis of Ala-|-Gly bond in repressor LexA.. Functionally, represses a number of genes involved in the response to DNA damage (SOS response), including recA and lexA. In the presence of single-stranded DNA, RecA interacts with LexA causing an autocatalytic cleavage which disrupts the DNA-binding part of LexA, leading to derepression of the SOS regulon and eventually DNA repair. The chain is LexA repressor from Burkholderia ambifaria (strain MC40-6).